The following is a 443-amino-acid chain: F-box/LRR-repeat protein At2g42720 (443 aa).

The F-box domain occupies 1-47; sequence MDRISSLPDEILEHILSFLSTKEAALTSSLSTRWKNVFVFVPSLHLD. 6 LRR repeats span residues 139–167, 169–194, 201–236, 271–296, 323–348, and 363–389; these read KLRL…CLDT, DFDG…VLED, CGSV…ELSC, SSHL…HLTS, DKKQ…VFKG, and CSGI…SYQG.

The polypeptide is F-box/LRR-repeat protein At2g42720 (Arabidopsis thaliana (Mouse-ear cress)).